A 259-amino-acid chain; its full sequence is Nuclear egress protein 1 (259 aa).

The CCCH-type zinc finger occupies 80–184; sequence CLDLSPYANE…YVVFQTRTLH (105 aa).

The protein belongs to the herpesviridae NEC1 protein family. In terms of assembly, forms a heterohexameric complex with NEC2. Interacts with capsid vertex specific component 2/CVC2; this interaction directs the capsid to the host inner nuclear membrane to initiate budding. Post-translationally, phosphorylated at serine residues in the N-terminus. This phosphorylation regulates the localization within the inner nuclear membrane.

It localises to the host nucleus inner membrane. Plays an essential role in virion nuclear egress, the first step of virion release from infected cell. Within the host nucleus, NEC1 interacts with the newly formed capsid through the vertexes and directs it to the inner nuclear membrane by associating with NEC2. Induces the budding of the capsid at the inner nuclear membrane as well as its envelopment into the perinuclear space. There, the NEC1/NEC2 complex promotes the fusion of the enveloped capsid with the outer nuclear membrane and the subsequent release of the viral capsid into the cytoplasm where it will reach the secondary budding sites in the host Golgi or trans-Golgi network. This is Nuclear egress protein 1 from Homo sapiens (Human).